A 367-amino-acid polypeptide reads, in one-letter code: MSSPPPARKGFYRQEVTKTAWEVRAVYQDLQPVGSGAYGAVCSAVDSRTGNKVAIKKLYRPFQSELFAKRAYRELRLLKHMRHENVIGLLDVFTPDETLDDFTDFYLVMPFMGTDLGKLMKHETLSEDRIQFLVYQMLKGLKYIHAAGVIHRDLKPGNLAVNEDCELKILDFGLARQADSEMTGYVVTRWYRAPEVILNWMRYTQTVDIWSVGCIMAEMITGKILFKGNDHLDQLKEIMKVTGTPPPEFVQKLQSAEAKNYMEGLPELEKKDFASVLTNASPQAVNLLEKMLVLDAEQRVTAAEALAHPYFESLRDTEDEPKAQKYDDSFDDVDRTLEEWKRVTYKEVLSFKPPRQLGARVPKETAL.

In terms of domain architecture, Protein kinase spans 27 to 311 (YQDLQPVGSG…AAEALAHPYF (285 aa)). Residues 33 to 41 (VGSGAYGAV) and Lys-56 contribute to the ATP site. Asp-153 acts as the Proton acceptor in catalysis. Thr-183 bears the Phosphothreonine; by MAP2K3 and MAP2K6 mark. Positions 183–185 (TGY) match the TXY motif. Tyr-185 is modified (phosphotyrosine; by MAP2K3 and MAP2K6).

This sequence belongs to the protein kinase superfamily. CMGC Ser/Thr protein kinase family. MAP kinase subfamily. As to quaternary structure, monomer. Interacts with the PDZ domain of the syntrophin SNTA1. Interacts with LIN7C, SCRIB, SYNJ2BP and SH3BP5. Interacts with PTPN4; this interaction induces the activation of PTPN4 phosphatase activity. Mg(2+) is required as a cofactor. In terms of processing, dually phosphorylated on Thr-183 and Tyr-185 by MAP2K3/MKK3 and MAP2K6/MKK6, which activates the enzyme. Post-translationally, ubiquitinated. Ubiquitination leads to degradation by the proteasome pathway. Highly expressed in skeletal muscle, lung and testes and also in the heart and thymus of both adult and neonatal rats.

Its subcellular location is the cytoplasm. It localises to the nucleus. The protein localises to the mitochondrion. It catalyses the reaction L-seryl-[protein] + ATP = O-phospho-L-seryl-[protein] + ADP + H(+). The enzyme catalyses L-threonyl-[protein] + ATP = O-phospho-L-threonyl-[protein] + ADP + H(+). Its activity is regulated as follows. Activated by phosphorylation on threonine and tyrosine. MAP2K3/MKK3 and MAP2K6/MKK6 are both essential for the activation of MAPK12 induced by environmental stress, whereas MAP2K6/MKK6 is the major MAPK12 activator in response to TNF-alpha. Functionally, serine/threonine kinase which acts as an essential component of the MAP kinase signal transduction pathway. MAPK12 is one of the four p38 MAPKs which play an important role in the cascades of cellular responses evoked by extracellular stimuli such as pro-inflammatory cytokines or physical stress leading to direct activation of transcription factors such as ELK1 and ATF2. Accordingly, p38 MAPKs phosphorylate a broad range of proteins and it has been estimated that they may have approximately 200 to 300 substrates each. Some of the targets are downstream kinases such as MAPKAPK2, which are activated through phosphorylation and further phosphorylate additional targets. Plays a role in myoblast differentiation and also in the down-regulation of cyclin D1 in response to hypoxia in adrenal cells suggesting MAPK12 may inhibit cell proliferation while promoting differentiation. Phosphorylates DLG1. Following osmotic shock, MAPK12 in the cell nucleus increases its association with nuclear DLG1, thereby causing dissociation of DLG1-SFPQ complexes. This function is independent of its catalytic activity and could affect mRNA processing and/or gene transcription to aid cell adaptation to osmolarity changes in the environment. Regulates UV-induced checkpoint signaling and repair of UV-induced DNA damage and G2 arrest after gamma-radiation exposure. MAPK12 is involved in the regulation of SLC2A1 expression and basal glucose uptake in L6 myotubes; and negatively regulates SLC2A4 expression and contraction-mediated glucose uptake in adult skeletal muscle. C-Jun (JUN) phosphorylation is stimulated by MAPK14 and inhibited by MAPK12, leading to a distinct AP-1 regulation. MAPK12 is required for the normal kinetochore localization of PLK1, prevents chromosomal instability and supports mitotic cell viability. MAPK12-signaling is also positively regulating the expansion of transient amplifying myogenic precursor cells during muscle growth and regeneration. This is Mitogen-activated protein kinase 12 (Mapk12) from Rattus norvegicus (Rat).